Consider the following 208-residue polypeptide: Large ribosomal subunit protein bL25 (208 aa).

The disordered stretch occupies residues 178–208 (LPPQQSEVPEPDSEEEPKEPEAIKEKDNDGE). Residues 186–195 (PEPDSEEEPK) are compositionally biased toward acidic residues. Positions 196–208 (EPEAIKEKDNDGE) are enriched in basic and acidic residues.

Belongs to the bacterial ribosomal protein bL25 family. CTC subfamily. In terms of assembly, part of the 50S ribosomal subunit; part of the 5S rRNA/L5/L18/L25 subcomplex. Contacts the 5S rRNA. Binds to the 5S rRNA independently of L5 and L18.

This is one of the proteins that binds to the 5S RNA in the ribosome where it forms part of the central protuberance. This is Large ribosomal subunit protein bL25 from Bacillus pumilus (strain SAFR-032).